We begin with the raw amino-acid sequence, 156 residues long: Small ribosomal subunit protein uS7 (156 aa).

This sequence belongs to the universal ribosomal protein uS7 family. As to quaternary structure, part of the 30S ribosomal subunit. Contacts proteins S9 and S11.

One of the primary rRNA binding proteins, it binds directly to 16S rRNA where it nucleates assembly of the head domain of the 30S subunit. Is located at the subunit interface close to the decoding center, probably blocks exit of the E-site tRNA. This Paracoccus denitrificans (strain Pd 1222) protein is Small ribosomal subunit protein uS7.